Reading from the N-terminus, the 43-residue chain is Photosystem I reaction center subunit IX (43 aa).

Residues 7–27 traverse the membrane as a helical segment; the sequence is YLSTAPVLATFWFGLLAGLLI.

The protein belongs to the PsaJ family.

Its subcellular location is the plastid. It is found in the chloroplast thylakoid membrane. Its function is as follows. May help in the organization of the PsaE and PsaF subunits. In Gnetum parvifolium (Small-leaved jointfir), this protein is Photosystem I reaction center subunit IX.